The primary structure comprises 374 residues: tRNA-specific 2-thiouridylase MnmA (374 aa).

Residues 17–24 and methionine 43 contribute to the ATP site; that span reads GMSGGVDS. The interaction with target base in tRNA stretch occupies residues 103 to 105; it reads NPD. The Nucleophile role is filled by cysteine 108. A disulfide bond links cysteine 108 and cysteine 204. Glycine 132 is an ATP binding site. The interaction with tRNA stretch occupies residues 154–156; that stretch reads KDQ. Cysteine 204 (cysteine persulfide intermediate) is an active-site residue. Residues 316-317 form an interaction with tRNA region; it reads RY.

It belongs to the MnmA/TRMU family.

The protein resides in the cytoplasm. The catalysed reaction is S-sulfanyl-L-cysteinyl-[protein] + uridine(34) in tRNA + AH2 + ATP = 2-thiouridine(34) in tRNA + L-cysteinyl-[protein] + A + AMP + diphosphate + H(+). Its function is as follows. Catalyzes the 2-thiolation of uridine at the wobble position (U34) of tRNA, leading to the formation of s(2)U34. In Pseudomonas fluorescens (strain SBW25), this protein is tRNA-specific 2-thiouridylase MnmA.